The chain runs to 448 residues: MHFIAISINHRTADVALREQVAFRDDALRIAHEDLYETKSILENVILSTCNRTEVYAVVDQIHTGRYYIQRFLARAFGFEVDDIKAMSEVKVGDEAVEHLLRVTSGLDSIVLGETQILGQIRDAFFLAQSTGTTGTIFNHLFKQAITFAKRAHNETDIADNAVSVSYAAVELAKKVFGKLKSKQAIIIGAGEMSELSLLNLLGSGITDITVVNRTIENAMKLAAKHQVKYDELSSLPNLLESADIVISSTSAQSYIITNEMIERIAENRKQDSLVLIDIAVPRDIEPGISAITNIFNYDVDDLKGLVDANLRERQLAAATISEQIPAEIHAHNEWVSMLGVVPVIRALREKAMAIQAETMDSIDRKLPGLSERERKIISKHTKSIINQMLKDPIKQAKELSSDKKSNEKFELFQNIFDIEAKCPHEQAKQQKESKVKEISARRIFSFE.

Residues 49–52 (TCNR), S109, 114–116 (ETQ), and Q120 each bind substrate. Catalysis depends on C50, which acts as the Nucleophile. Position 189 to 194 (189 to 194 (GAGEMS)) interacts with NADP(+).

The protein belongs to the glutamyl-tRNA reductase family. As to quaternary structure, homodimer.

The enzyme catalyses (S)-4-amino-5-oxopentanoate + tRNA(Glu) + NADP(+) = L-glutamyl-tRNA(Glu) + NADPH + H(+). It participates in porphyrin-containing compound metabolism; protoporphyrin-IX biosynthesis; 5-aminolevulinate from L-glutamyl-tRNA(Glu): step 1/2. Functionally, catalyzes the NADPH-dependent reduction of glutamyl-tRNA(Glu) to glutamate 1-semialdehyde (GSA). This is Glutamyl-tRNA reductase from Staphylococcus aureus (strain MRSA252).